Consider the following 262-residue polypeptide: Ribosomal RNA small subunit methyltransferase A (262 aa).

Positions 14, 16, 41, 63, 85, and 105 each coordinate S-adenosyl-L-methionine.

The protein belongs to the class I-like SAM-binding methyltransferase superfamily. rRNA adenine N(6)-methyltransferase family. RsmA subfamily.

The protein localises to the cytoplasm. The catalysed reaction is adenosine(1518)/adenosine(1519) in 16S rRNA + 4 S-adenosyl-L-methionine = N(6)-dimethyladenosine(1518)/N(6)-dimethyladenosine(1519) in 16S rRNA + 4 S-adenosyl-L-homocysteine + 4 H(+). Its function is as follows. Specifically dimethylates two adjacent adenosines (A1518 and A1519) in the loop of a conserved hairpin near the 3'-end of 16S rRNA in the 30S particle. May play a critical role in biogenesis of 30S subunits. The polypeptide is Ribosomal RNA small subunit methyltransferase A (Maridesulfovibrio salexigens (strain ATCC 14822 / DSM 2638 / NCIMB 8403 / VKM B-1763) (Desulfovibrio salexigens)).